Here is an 801-residue protein sequence, read N- to C-terminus: H(+)/Cl(-) exchange transporter 3 (801 aa).

Residues 1 to 125 (MESEQLFHRG…WEMTKSLYDA (125 aa)) are Cytoplasmic-facing. 3 consecutive short sequence motifs (di-leucine internalization motif; mediates targeting to late endosome and lysosome membranes) follow at residues 28 to 29 (LL), 46 to 47 (LL), and 71 to 75 (LLDLL). Residues 126-163 (WSGWLVVTLTGLASGALAGLIDIAADWMTDLKEGICLS) form a helical membrane-spanning segment. A glycan (N-linked (GlcNAc...) asparagine) is linked at Asn177. A helical transmembrane segment spans residues 209-232 (MNYIMYIFWALSFAFLAVSLVKVF). Residues 238-242 (GSGIP) carry the Selectivity filter part_1 motif. Ser239 lines the chloride pocket. Residues 241-248 (IPEIKTIL) constitute an intramembrane region (helical). 2 helical membrane-spanning segments follow: residues 258–276 (GKWT…VASG) and 282–301 (EGPL…YLFP). The Selectivity filter part_2 motif lies at 280-284 (GKEGP). 2 intramembrane regions (helical) span residues 313 to 325 (VLSA…VSVA) and 329 to 337 (PIGGVLFSL). The next 3 helical transmembrane spans lie at 349 to 367 (LWRS…RSIN), 391 to 416 (FPFI…AWCR), and 423 to 443 (FGKY…VIAF). Residues Asn451 and Asn479 are each glycosylated (N-linked (GlcNAc...) asparagine). The helical transmembrane segment at 500-520 (IWQLCLALIFKIIMTVFTFGI) threads the bilayer. Positions 525–529 (GLFIP) match the Selectivity filter part_3 motif. Phe527 is a chloride binding site. Intramembrane regions (helical) lie at residues 555 to 569 (GLYA…LGGV) and 573 to 584 (TVSLVVIVFELT). Residues 585 to 588 (GGLE) constitute an intramembrane region (note=Loop between two helices). The helical transmembrane segment at 589 to 607 (YIVPLMAAVMTSKWVGDAF) threads the bilayer. Residues 608 to 801 (GREGIYEAHI…NQDPASIMFN (194 aa)) lie on the Cytoplasmic side of the membrane. Tyr613 lines the chloride pocket. CBS domains follow at residues 641–705 (MRPR…ARKK) and 738–795 (LDMS…NQDP). ATP is bound by residues 672 to 674 (YNG) and 779 to 782 (TKKD).

It belongs to the chloride channel (TC 2.A.49) family. ClC-3/CLCN3 subfamily. In terms of assembly, monomer and homodimer. Forms heterodimers with CLCN4. Post-translationally, N-glycosylated.

It localises to the early endosome membrane. The protein localises to the late endosome membrane. The protein resides in the lysosome membrane. It is found in the cell membrane. Its function is as follows. Strongly outwardly rectifying, electrogenic H(+)/Cl(-)exchanger which mediates the exchange of chloride ions against protons. The CLC channel family contains both chloride channels and proton-coupled anion transporters that exchange chloride or another anion for protons. The presence of conserved gating glutamate residues is typical for family members that function as antiporters. This is H(+)/Cl(-) exchange transporter 3 (CLCN3) from Pongo abelii (Sumatran orangutan).